We begin with the raw amino-acid sequence, 117 residues long: Large ribosomal subunit protein bL20c (117 aa).

This sequence belongs to the bacterial ribosomal protein bL20 family.

It is found in the plastid. The protein localises to the chloroplast. Functionally, binds directly to 23S ribosomal RNA and is necessary for the in vitro assembly process of the 50S ribosomal subunit. It is not involved in the protein synthesizing functions of that subunit. The sequence is that of Large ribosomal subunit protein bL20c from Calycanthus floridus var. glaucus (Eastern sweetshrub).